Consider the following 346-residue polypeptide: Signal recognition particle receptor FtsY (346 aa).

Residues 143-150 (GVNGVGKT), 225-229 (DTSGR), and 289-292 (TKMD) each bind GTP.

Belongs to the GTP-binding SRP family. FtsY subfamily. In terms of assembly, part of the signal recognition particle protein translocation system, which is composed of SRP and FtsY.

It localises to the cell membrane. It is found in the cytoplasm. The enzyme catalyses GTP + H2O = GDP + phosphate + H(+). Its function is as follows. Involved in targeting and insertion of nascent membrane proteins into the cytoplasmic membrane. Acts as a receptor for the complex formed by the signal recognition particle (SRP) and the ribosome-nascent chain (RNC). The chain is Signal recognition particle receptor FtsY from Mycoplasma genitalium (strain ATCC 33530 / DSM 19775 / NCTC 10195 / G37) (Mycoplasmoides genitalium).